The chain runs to 173 residues: Acetyl-CoA decarbonylase/synthase complex subunit epsilon (173 aa).

The protein belongs to the CdhB family. Heterotetramer of two alpha and two epsilon subunits. The ACDS complex is made up of alpha, epsilon, beta, gamma and delta subunits with a probable stoichiometry of (alpha(2)epsilon(2))(4)-beta(8)-(gamma(1)delta(1))(8).

The protein operates within one-carbon metabolism; methanogenesis from acetate. Its function is as follows. Part of a complex that catalyzes the reversible cleavage of acetyl-CoA, allowing growth on acetate as sole source of carbon and energy. The alpha-epsilon subcomponent functions as a carbon monoxide dehydrogenase. The precise role of the epsilon subunit is unclear; it may have a stabilizing role within the alpha(2)epsilon(2) component and/or be involved in electron transfer to FAD during a potential FAD-mediated CO oxidation. The sequence is that of Acetyl-CoA decarbonylase/synthase complex subunit epsilon from Methanothermobacter thermautotrophicus (strain ATCC 29096 / DSM 1053 / JCM 10044 / NBRC 100330 / Delta H) (Methanobacterium thermoautotrophicum).